Consider the following 238-residue polypeptide: Ribonuclease PH (238 aa).

Phosphate contacts are provided by residues Arg86 and 124–126; that span reads GTR.

This sequence belongs to the RNase PH family. In terms of assembly, homohexameric ring arranged as a trimer of dimers.

The enzyme catalyses tRNA(n+1) + phosphate = tRNA(n) + a ribonucleoside 5'-diphosphate. In terms of biological role, phosphorolytic 3'-5' exoribonuclease that plays an important role in tRNA 3'-end maturation. Removes nucleotide residues following the 3'-CCA terminus of tRNAs; can also add nucleotides to the ends of RNA molecules by using nucleoside diphosphates as substrates, but this may not be physiologically important. Probably plays a role in initiation of 16S rRNA degradation (leading to ribosome degradation) during starvation. The chain is Ribonuclease PH from Pasteurella multocida (strain Pm70).